The following is a 309-amino-acid chain: Taste receptor type 2 member 8 (309 aa).

Residues 1–7 (MFSPADN) lie on the Extracellular side of the membrane. Residues 8–28 (IFIILITGEFILGILGNGYIA) form a helical membrane-spanning segment. Residues 29 to 50 (LVNWIDWIKKKKISTIDYILTN) are Cytoplasmic-facing. Residues 51-71 (LVISRICLISVMVVNGIVIAV) form a helical membrane-spanning segment. Over 72-82 (YPDVYTKSKLQ) the chain is Extracellular. Residues 83-103 (IAICTFWTFANYLNMWITTCL) form a helical membrane-spanning segment. Residues 104 to 131 (NVFYFLKIANSSHPLFLWLKQKIDMVVR) lie on the Cytoplasmic side of the membrane. The chain crosses the membrane as a helical span at residues 132 to 152 (WILLGCFAISLLVSLIAAIVL). The Extracellular segment spans residues 153–184 (SYDYRFHAIAKHKRNITEMFHVSKRPYFEPLT). N167 carries N-linked (GlcNAc...) asparagine glycosylation. Residues 185-205 (LFNLFAIVPFIVSLISFFLLV) traverse the membrane as a helical segment. The Cytoplasmic segment spans residues 206-239 (RSLWRHTKQIKLYATGGRDPSTEVHVRAIKTMTS). The helical transmembrane segment at 240–260 (FIFLFFLYYISSILVTFSYLM) threads the bilayer. The Extracellular portion of the chain corresponds to 261–266 (TKYKLA). Residues 267–287 (VEFGEIVAILYPLGHSLILIV) form a helical membrane-spanning segment. The Cytoplasmic segment spans residues 288–309 (LNNKLRQTFVRMLTCRKIACVI).

This sequence belongs to the G-protein coupled receptor T2R family.

Its subcellular location is the membrane. Receptor that may play a role in the perception of bitterness and is gustducin-linked. May play a role in sensing the chemical composition of the gastrointestinal content. The activity of this receptor may stimulate alpha gustducin, mediate PLC-beta-2 activation and lead to the gating of TRPM5. The protein is Taste receptor type 2 member 8 (TAS2R8) of Gorilla gorilla gorilla (Western lowland gorilla).